A 392-amino-acid chain; its full sequence is uncharacterized protein (392 aa).

This sequence belongs to the chlamydial CPn_0675/CT_696/TC_0068 family.

This is an uncharacterized protein from Chlamydia muridarum (strain MoPn / Nigg).